We begin with the raw amino-acid sequence, 97 residues long: Small ribosomal subunit protein bS20 (97 aa).

The protein belongs to the bacterial ribosomal protein bS20 family.

Its function is as follows. Binds directly to 16S ribosomal RNA. This is Small ribosomal subunit protein bS20 from Prochlorococcus marinus (strain AS9601).